The following is a 271-amino-acid chain: MTQAPWSLARKTAIVTGGSRGIGRAIAIHLTCKGLSKLAITYISNLAAAESTLDECRKNGLGMGIAIKADLLDPNIGHGLVQQALAGLETPTIDILVNNAAYLDPSEAASVEELTLPVFQKVMQANAFAPISIISATMPHLPVSGGRVINISSAAAKLANPGPVMTYGASKAALDSFTRSLAAEFATDKAATFNTVCVGPTVTDGFHVVGKLYPEGFMEELAKAFTAAQRVGMPQDIAFIVGFLAGEEARWVNGACMSANGGFREVLPALS.

NADP(+) contacts are provided by Ile22, Asp70, and Asn99. Active-site proton donor residues include Ser152 and Ser153. NADP(+)-binding residues include Tyr167, Lys171, and Thr203. The active-site Proton acceptor is the Tyr167. The active-site Lowers pKa of active site Tyr is Lys171.

It belongs to the short-chain dehydrogenases/reductases (SDR) family.

The enzyme catalyses a primary alcohol + NAD(+) = an aldehyde + NADH + H(+). The catalysed reaction is a secondary alcohol + NAD(+) = a ketone + NADH + H(+). It functions in the pathway secondary metabolite biosynthesis. It participates in alkaloid biosynthesis. The protein operates within mycotoxin biosynthesis. Its function is as follows. Short chain dehydrogenase; part of the gene cluster that mediates the biosynthesis of the aspoquinolone mycotoxins. The role of asqE within the aspoquinolone pathway has still to be determined. The first step of the pathway is catalyzed by the nonribosomal peptide synthetase asqK that condenses anthranilic acid and O-methyl-L-tyrosine to produce 4'-methoxycyclopeptin. 4'-methoxycyclopeptin is then converted to 4'-methoxydehydrocyclopeptin by the ketoglutarate-dependent dioxygenase asqJ. AsqJ also converts its first product 4'-methoxydehydrocyclopeptin to 4'-methoxycyclopenin. The following conversion of 4'-methoxycyclopenin into 4'-methoxyviridicatin is catalyzed by the cyclopenase asqI. 4'-methoxyviridicatin is the precursor of quinolone natural products, and is further converted to quinolinone B. The prenyltransferase asqH1 then catalyzes the canonical Friedel-Crafts alkylation of quinolinone B with dimethylallyl cation to yield dimethylallyl quinolone, which is subjected to FAD-dependent dehydrogenation by the FAD-linked oxidoreductase asqF to yield conjugated aryl diene. The delta(3') double bond then serves as the site of the second alkylation with DMAPP catalyzed by the prenyltransferase asqH2 to yield a carbenium ion intermediate, which can be attacked by H(2)O to yield a styrenyl quinolone containing a C3'-hydroxyprenyl chain. The FAD-dependent monooxygenase asqG performs epoxidation of the terminal C7'-C8' olefin. Finally, after dehydratation of the epoxide at C3 by asqC, the quinolone epoxide rearrangement protein asqO catalyzes an enzymatic 3-exo-tet cyclization to yield the cyclopropyl-THF ring system in aspoquinolone. In Emericella nidulans (strain FGSC A4 / ATCC 38163 / CBS 112.46 / NRRL 194 / M139) (Aspergillus nidulans), this protein is Short chain dehydrogenase asqE.